We begin with the raw amino-acid sequence, 579 residues long: Glutamine--tRNA ligase (579 aa).

The 'HIGH' region motif lies at 41–51 (PEPNGYLHIGH). Residues 42–44 (EPN) and 48–54 (HIGHAKA) each bind ATP. Positions 74 and 218 each coordinate L-glutamine. Residues Thr237, 285–286 (RL), and 293–295 (MSK) contribute to the ATP site. Positions 292 to 296 (VMSKR) match the 'KMSKS' region motif.

This sequence belongs to the class-I aminoacyl-tRNA synthetase family. Monomer.

Its subcellular location is the cytoplasm. It carries out the reaction tRNA(Gln) + L-glutamine + ATP = L-glutaminyl-tRNA(Gln) + AMP + diphosphate. In Xanthomonas euvesicatoria pv. vesicatoria (strain 85-10) (Xanthomonas campestris pv. vesicatoria), this protein is Glutamine--tRNA ligase.